Consider the following 113-residue polypeptide: U11-theraphotoxin-Hhn1a (113 aa).

The first 21 residues, 1-21, serve as a signal peptide directing secretion; sequence MNTVRVTFLLVFVLAVSLGRA. Residues 22-74 constitute a propeptide that is removed on maturation; that stretch reads DKEENRMEMQEKTEQGKSYLDFAENLLLQKLEELEAKLLEEDSEESRNSRQKR. Residues 61–83 form a disordered region; that stretch reads EEDSEESRNSRQKRCIGEGVPCD. 3 disulfide bridges follow: Cys75–Cys90, Cys82–Cys95, and Cys89–Cys110.

This sequence belongs to the neurotoxin 14 (magi-1) family. 01 (HNTX-16) subfamily. In terms of tissue distribution, expressed by the venom gland.

The protein resides in the secreted. Its function is as follows. Probable ion channel inhibitor. In Cyriopagopus hainanus (Chinese bird spider), this protein is U11-theraphotoxin-Hhn1a.